Here is a 1135-residue protein sequence, read N- to C-terminus: Envelopment polyprotein (1135 aa).

The first 18 residues, 1 to 18 (MIMWGLLLTMILIDFGAS), serve as a signal peptide directing secretion. The Lumenal segment spans residues 19–495 (LRNVYDMKIE…ALLTTFCFGW (477 aa)). Cystine bridges form between cysteine 29–cysteine 151, cysteine 63–cysteine 157, cysteine 109–cysteine 128, cysteine 133–cysteine 138, cysteine 175–cysteine 185, cysteine 210–cysteine 247, cysteine 234–cysteine 351, cysteine 376–cysteine 435, cysteine 380–cysteine 389, cysteine 405–cysteine 424, and cysteine 452–cysteine 475. The N-linked (GlcNAc...) asparagine; by host glycan is linked to asparagine 134. Residues asparagine 235 and asparagine 347 are each glycosylated (N-linked (GlcNAc...) asparagine; by host). N-linked (GlcNAc...) asparagine; by host glycosylation occurs at asparagine 399. A helical transmembrane segment spans residues 496-516 (ILILSITLAVLVVLKFFAAIL). The interval 516–533 (LHNSSQENRFKIILRKIK) is binding to the ribonucleoprotein. Topologically, residues 517–627 (HNSSQENRFK…LNLFRYKSRC (111 aa)) are cytoplasmic. CCHC-type zinc fingers lie at residues 545–565 (CEVC…NLSC) and 570–591 (CPYC…YKVC). Binding to the ribonucleoprotein regions lie at residues 588-605 (YKVC…KKTI), 592-603 (QATHRFRDDLKK), and 611-625 (SPGC…RYKS). One can recognise an ITAM domain in the interval 611–634 (SPGCYRTLNLFRYKSRCYIFTVWV). Phosphotyrosine is present on residues tyrosine 615 and tyrosine 628. The YxxL motif lies at 615–618 (YRTL). Residues 628 to 648 (YIFTVWVTLLIIESIMWAASA) form a helical membrane-spanning segment. At 649–1105 (SETVLEPSWN…EWITGIFNGN (457 aa)) the chain is on the lumenal side. Disulfide bonds link cysteine 735-cysteine 770, cysteine 739-cysteine 777, cysteine 751-cysteine 885, cysteine 765-cysteine 896, cysteine 780-cysteine 904, cysteine 806-cysteine 815, cysteine 823-cysteine 832, and cysteine 863-cysteine 867. A fusion loop region spans residues 757 to 777 (FEYENNWGCNPADCPGIGTGC). The N-linked (GlcNAc...) asparagine; by host glycan is linked to asparagine 928. Intrachain disulfides connect cysteine 970/cysteine 1000, cysteine 993/cysteine 1045, cysteine 1010/cysteine 1015, cysteine 1046/cysteine 1051, and cysteine 1085/cysteine 1089. The helical transmembrane segment at 1106 to 1126 (WIVIVVLVFFFILSLILLSLL) threads the bilayer. The interval 1122–1135 (LLSLLCPIRKHKRS) is binding to the ribonucleoprotein. Over 1127–1135 (CPIRKHKRS) the chain is Cytoplasmic.

This sequence belongs to the hantavirus envelope glycoprotein family. In terms of assembly, homodimer. Homotetramer; forms heterotetrameric Gn-Gc spikes in the pre-fusion conformation. Interacts (via C-terminus) with the nucleoprotein. Interacts with host TUFM; this interaction contributes to the virus-induced degradation of mitochondria by autophagy, which leads to degradation of host MAVS and inhibition of type I interferon (IFN) responses. Interacts with host MAP1LC3B; this interaction contributes to the virus-induced degradation of mitochondria by autophagy, which leads to degradation of host MAVS and inhibition of type I interferon (IFN) responses. As to quaternary structure, homodimer. Homotetramer; forms heterotetrameric Gn-Gc spikes in the pre-fusion conformation. Homotrimer; forms homotrimer in the post-fusion conformation at acidic pH. Interacts (via C-terminus) with the nucleoprotein. In terms of processing, envelope polyprotein precursor is quickly cleaved in vivo just after synthesis, presumably by host signal peptidase.

The protein localises to the virion membrane. The protein resides in the host cell surface. Its subcellular location is the host Golgi apparatus membrane. It localises to the host endoplasmic reticulum membrane. It is found in the host mitochondrion. Functionally, forms homotetramers with glycoprotein C at the surface of the virion. Attaches the virion to host cell receptors including integrin ITGAV/ITGB3. This attachment induces virion internalization predominantly through clathrin-dependent endocytosis. Mediates the assembly and budding of infectious virus particles through its interaction with the nucleocapsid protein and the viral genome. May dysregulate normal immune and endothelial cell responses through an ITAM motif. Translocates to mitochondria, binds to host TUFM and recruits MAP1LC3B. These interactions induce mitochondrial autophagy and therefore destruction of host MAVS leading to inhibition of type I interferon (IFN) responses. Concomitant breakdown of glycoprotein N is apparently prevented by the nucleoprotein that may inhibit Gn-stimulated autophagosome-lysosome fusion. Interacts with the viral genomic RNA. Its function is as follows. Forms homotetramers with glycoprotein N at the surface of the virion. Attaches the virion to host cell receptors including integrin ITGAV/ITGB3. This attachment induces virion internalization predominantly through clathrin-dependent endocytosis. Class II fusion protein that promotes fusion of viral membrane with host endosomal membrane after endocytosis of the virion. This is Envelopment polyprotein (GP) from Dobrava-Belgrade orthohantavirus (DOBV).